Reading from the N-terminus, the 466-residue chain is Asparagine--tRNA ligase (466 aa).

The protein belongs to the class-II aminoacyl-tRNA synthetase family. Homodimer.

It localises to the cytoplasm. The catalysed reaction is tRNA(Asn) + L-asparagine + ATP = L-asparaginyl-tRNA(Asn) + AMP + diphosphate + H(+). This chain is Asparagine--tRNA ligase, found in Buchnera aphidicola subsp. Acyrthosiphon pisum (strain APS) (Acyrthosiphon pisum symbiotic bacterium).